The sequence spans 254 residues: Proteasome activator complex subunit 3 (254 aa).

K6 and K14 each carry N6-acetyllysine. An N6-acetyllysine; by P300/CBP modification is found at K195.

As to quaternary structure, homoheptamer. Acetylation at the major site Lys-195 is important for oligomerization and ability to degrade its target substrates. Deacetylated by SIRT1.

Implicated in immunoproteasome assembly and required for efficient antigen processing. The PA28 activator complex enhances the generation of class I binding peptides by altering the cleavage pattern of the proteasome. The chain is Proteasome activator complex subunit 3 from Gallus gallus (Chicken).